The chain runs to 226 residues: 2-C-methyl-D-erythritol 4-phosphate cytidylyltransferase (226 aa).

This sequence belongs to the IspD/TarI cytidylyltransferase family. IspD subfamily.

It carries out the reaction 2-C-methyl-D-erythritol 4-phosphate + CTP + H(+) = 4-CDP-2-C-methyl-D-erythritol + diphosphate. It functions in the pathway isoprenoid biosynthesis; isopentenyl diphosphate biosynthesis via DXP pathway; isopentenyl diphosphate from 1-deoxy-D-xylulose 5-phosphate: step 2/6. Catalyzes the formation of 4-diphosphocytidyl-2-C-methyl-D-erythritol from CTP and 2-C-methyl-D-erythritol 4-phosphate (MEP). The sequence is that of 2-C-methyl-D-erythritol 4-phosphate cytidylyltransferase from Rhodococcus opacus (strain B4).